The primary structure comprises 123 residues: Fluoride-specific ion channel FluC (123 aa).

The next 4 membrane-spanning stretches (helical) occupy residues 3–23, 34–54, 67–87, and 99–119; these read IAWV…LSNA, WGTL…FYLF, LVLV…LETL, and LLNM…GLVV. Positions 74 and 77 each coordinate Na(+).

Belongs to the fluoride channel Fluc/FEX (TC 1.A.43) family.

It is found in the cell inner membrane. The catalysed reaction is fluoride(in) = fluoride(out). Na(+) is not transported, but it plays an essential structural role and its presence is essential for fluoride channel function. Functionally, fluoride-specific ion channel. Important for reducing fluoride concentration in the cell, thus reducing its toxicity. This is Fluoride-specific ion channel FluC from Magnetococcus marinus (strain ATCC BAA-1437 / JCM 17883 / MC-1).